Here is an 80-residue protein sequence, read N- to C-terminus: Photosystem II extrinsic protein V (80 aa).

Residue Met47 coordinates heme.

This sequence belongs to the cytochrome c family. PsbV subfamily. In terms of assembly, PSII is composed of 1 copy each of membrane proteins PsbA, PsbB, PsbC, PsbD, PsbE, PsbF, PsbH, PsbI, PsbJ, PsbK, PsbL, PsbM, PsbT, PsbY, PsbZ, Psb30/Ycf12, at least 3 peripheral proteins of the oxygen-evolving complex and a large number of cofactors. It forms dimeric complexes. The cofactor is heme.

Its subcellular location is the plastid. It is found in the chloroplast thylakoid membrane. One of the extrinsic, lumenal subunits of photosystem II (PSII). PSII is a light-driven water plastoquinone oxidoreductase, using light energy to abstract electrons from H(2)O, generating a proton gradient subsequently used for ATP formation. The extrinsic proteins stabilize the structure of photosystem II oxygen-evolving complex (OEC), the ion environment of oxygen evolution and protect the OEC against heat-induced inactivation. The polypeptide is Photosystem II extrinsic protein V (Thalassiosira weissflogii (Marine diatom)).